The chain runs to 342 residues: Cystein proteinase inhibitor protein salarin (342 aa).

Residues 1–19 (MKSLVLLLLVAVTVSSVVS) form the signal peptide. A glycan (N-linked (GlcNAc) asparagine) is linked at Asn153. The O-linked (GlcNAc) threonine glycan is linked to Thr184.

In terms of processing, N-glycosylated, with sialylated biantennary complex-type glycans. O-glycosylated, with sialylated oligosaccharides.

It localises to the cytoplasm. The protein localises to the vacuole. Functionally, inhibits papain and ficin (cysteine proteinases) but not trypsin (a serine proteinase). The sequence is that of Cystein proteinase inhibitor protein salarin (salarin) from Salvelinus alpinus (Arctic char).